The chain runs to 902 residues: Inter-alpha-trypsin inhibitor heavy chain H1 (902 aa).

The first 28 residues, Met-1–Gly-28, serve as a signal peptide directing secretion. Residues Ser-29 to Glu-158 enclose the VIT domain. Residue Cys-52 is glycosylated (S-linked (Hex...) cysteine). Asn-69 carries N-linked (GlcNAc...) asparagine glycosylation. Residue Ser-121 is modified to Phosphoserine. Asn-277 carries an N-linked (GlcNAc...) asparagine glycan. The region spanning Asn-282–Glu-442 is the VWFA domain. A phosphothreonine mark is found at Thr-394 and Thr-399. Residues Ser-637–Gln-651 are compositionally biased toward polar residues. The tract at residues Ser-637–Arg-656 is disordered. Ser-639 is a glycosylation site (O-linked (GalNAc...) serine). O-linked (GalNAc...) threonine glycosylation occurs at Thr-644. Asp-663 is subject to Aspartate 1-(chondroitin 4-sulfate)-ester. The propeptide occupies Pro-664 to Phe-902. Asn-741 carries N-linked (GlcNAc...) asparagine glycosylation.

This sequence belongs to the ITIH family. I-alpha-I plasma protease inhibitors are assembled from one or two heavy chains (HC) and one light chain, bikunin. Inter-alpha-inhibitor (I-alpha-I) is composed of ITIH1/HC1, ITIH2/HC2 and bikunin. Interacts with TNFAIP6 (via Link and CUB domains). Heavy chains are linked to bikunin via chondroitin 4-sulfate esterified to the alpha-carboxyl of the C-terminal aspartate after propeptide cleavage. In terms of processing, the S-linked glycan is composed of two 6-carbon sugars, possibly Glc or Gal.

It localises to the secreted. Its function is as follows. May act as a carrier of hyaluronan in serum or as a binding protein between hyaluronan and other matrix protein, including those on cell surfaces in tissues to regulate the localization, synthesis and degradation of hyaluronan which are essential to cells undergoing biological processes. The sequence is that of Inter-alpha-trypsin inhibitor heavy chain H1 (ITIH1) from Sus scrofa (Pig).